Consider the following 426-residue polypeptide: Serine hydroxymethyltransferase (426 aa).

Residues leucine 115 and 119–121 (GHI) contribute to the (6S)-5,6,7,8-tetrahydrofolate site. Lysine 225 is subject to N6-(pyridoxal phosphate)lysine.

This sequence belongs to the SHMT family. In terms of assembly, homodimer. Requires pyridoxal 5'-phosphate as cofactor.

The protein resides in the cytoplasm. It participates in amino-acid biosynthesis; glycine biosynthesis; glycine from L-serine: step 1/1. Catalyzes the reversible interconversion of serine and glycine with a modified folate serving as the one-carbon carrier. Also exhibits a pteridine-independent aldolase activity toward beta-hydroxyamino acids, producing glycine and aldehydes, via a retro-aldol mechanism. The sequence is that of Serine hydroxymethyltransferase from Thermoplasma acidophilum (strain ATCC 25905 / DSM 1728 / JCM 9062 / NBRC 15155 / AMRC-C165).